We begin with the raw amino-acid sequence, 587 residues long: Lamin-B1 (587 aa).

The span at Met-1–Ala-11 shows a compositional bias: polar residues. The tract at residues Met-1 to Arg-29 is disordered. Ala-2 is subject to N-acetylalanine. The segment at Ala-2–Glu-34 is head. A phosphothreonine mark is found at Thr-3 and Thr-5. Arg-14 bears the Omega-N-methylarginine mark. Ser-16 is subject to Phosphoserine. Thr-20 bears the Phosphothreonine mark. The residue at position 23 (Ser-23) is a Phosphoserine. The residue at position 25 (Thr-25) is a Phosphothreonine. Ser-28 carries the post-translational modification Phosphoserine. Positions Glu-32–Leu-388 constitute an IF rod domain. Positions Glu-35–Glu-69 are coil 1A. The tract at residues Val-70–Leu-81 is linker 1. The segment at Tyr-82 to Glu-215 is coil 1B. A Glycyl lysine isopeptide (Lys-Gly) (interchain with G-Cter in SUMO2) cross-link involves residue Lys-102. Lys-111 is subject to N6-acetyllysine. Lys-123 participates in a covalent cross-link: Glycyl lysine isopeptide (Lys-Gly) (interchain with G-Cter in SUMO2). Ser-126 is modified (phosphoserine). Residue Lys-145 forms a Glycyl lysine isopeptide (Lys-Gly) (interchain with G-Cter in SUMO2) linkage. Lys-157 bears the N6-acetyllysine; alternate mark. Lys-157 participates in a covalent cross-link: Glycyl lysine isopeptide (Lys-Gly) (interchain with G-Cter in SUMO2); alternate. Phosphoserine is present on Ser-158. Residue Lys-181 forms a Glycyl lysine isopeptide (Lys-Gly) (interchain with G-Cter in SUMO2) linkage. Phosphoserine is present on residues Ser-200 and Ser-232. Residues Ile-216 to Ala-243 are linker 2. Residues Lys-241 and Lys-261 each participate in a glycyl lysine isopeptide (Lys-Gly) (interchain with G-Cter in SUMO2) cross-link. The segment at Gln-244–Glu-386 is coil 2. Position 271 is an N6-acetyllysine; alternate (Lys-271). Residue Lys-271 forms a Glycyl lysine isopeptide (Lys-Gly) (interchain with G-Cter in SUMO2); alternate linkage. Ser-278 and Ser-302 each carry phosphoserine. Residue Lys-312 forms a Glycyl lysine isopeptide (Lys-Gly) (interchain with G-Cter in SUMO2) linkage. Lys-330 is modified (N6-acetyllysine; alternate). Lys-330 participates in a covalent cross-link: Glycyl lysine isopeptide (Lys-Gly) (interchain with G-Cter in SUMO2); alternate. Phosphoserine is present on residues Ser-375 and Ser-393. The segment at Arg-387–Met-587 is tail. Low complexity predominate over residues Leu-390–Val-409. The interval Leu-390 to Ile-432 is disordered. An O-linked (GlcNAc) threonine glycan is attached at Thr-399. At Arg-413 the chain carries Omega-N-methylarginine. Positions Lys-415 to Asp-420 match the Nuclear localization signal motif. An LTD domain is found at Val-430–Phe-546. Lys-483 is subject to N6-acetyllysine. Lys-532 is covalently cross-linked (Glycyl lysine isopeptide (Lys-Gly) (interchain with G-Cter in SUMO2)). Ser-534 carries the post-translational modification Phosphoserine. Residue Lys-547 forms a Glycyl lysine isopeptide (Lys-Gly) (interchain with G-Cter in SUMO2) linkage. A disordered region spans residues Ile-550 to Met-587. Residues Pro-551 to Pro-561 show a composition bias toward acidic residues. Residues Gln-573–Met-587 are compositionally biased toward polar residues. Thr-576 carries the post-translational modification Phosphothreonine. The residue at position 584 (Cys-584) is a Cysteine methyl ester. Cys-584 carries S-farnesyl cysteine lipidation. A propeptide spans Ala-585–Met-587 (removed in mature form).

The protein belongs to the intermediate filament family. In terms of assembly, homodimer. Lamin dimers then assemble into dimeric head-to-tail polymers. Ultimately, two head-to-tail polymers assemble laterally into a protofilament with a uniformly shaped rod of 3.5 nm in diameter. Interacts with SPAG4 and SEPT12. Post-translationally, B-type lamins undergo a series of modifications, such as farnesylation and phosphorylation. Increased phosphorylation of the lamins occurs before envelope disintegration and probably plays a role in regulating lamin associations. Phosphorylation plays a key role in lamin organization, subcellular localization and nuclear envelope disintegration. Phosphorylation by CDK1 at Ser-23 and Ser-393 at the onset of mitosis drives lamin disassembly and nuclear envelope breakdown.

The protein resides in the nucleus lamina. Functionally, lamins are intermediate filament proteins that assemble into a filamentous meshwork, and which constitute the major components of the nuclear lamina, a fibrous layer on the nucleoplasmic side of the inner nuclear membrane. Lamins provide a framework for the nuclear envelope, bridging the nuclear envelope and chromatin, thereby playing an important role in nuclear assembly, chromatin organization, nuclear membrane and telomere dynamics. The structural integrity of the lamina is strictly controlled by the cell cycle, as seen by the disintegration and formation of the nuclear envelope in prophase and telophase, respectively. This Rattus norvegicus (Rat) protein is Lamin-B1 (Lmnb1).